We begin with the raw amino-acid sequence, 2311 residues long: MKSRKVKSVRPGRGRILGLTDVTPSTSLPPLVEGQVRSFLQVTVSKILWTVPKPPPSVLVRLRWWGETANGTVFRPRDSSQTEQKGAKTTTRYAVRCGPKQFTSYLTDMGMLVFEVMTKLDHFPIGRAQISGIAQLSLAHPVSGFFTIVSPTSEKLGELQVSVQLEPLPETYDSSSSAPNTDISFDHASESYGKALTGHPTTMNDPPQPIILSLASADKRESESSSRVTTPRGRDHLYFQENADPGKDSYRGTQDHVTVGWSNVTEGVQSIKPIYSEGTTAGKDALTVNSGPATKDLLSALLDQGSKLRDAMVVSALKSSPDLDHNPDIKLPLALNNYSLSQARATSEIPSPTLMRNLLNSRHSPQTRDILLQPADSFIPDMEAPSDAKAIELLLGSSVLSPGHYWDGTGSPPESISGSDFYNESELNDPLYDQSLLEKLFYKAPKSDSSASDFMSDDENTRSQNKKNKIALDRGRHRDNSPSEYKEDAKQTKGNDSLRDSKTSEKSTSRCEGISLSMDQAALLGQIHVAHVVVESLRVPLDGTAVTPSKTNSRGRPPRPVRPAKQTFFVEFQFPVLSKSRSGEVNSATEITRLVSSKVVNGSIKFQQRFTFPVLFSGQMIKHWWNTDLTFRIFLRKGTQNKPGPVGSATLPLRDVLQSPGLSVTCSLPVSCTAEDSHTAAGPLKISVALAGDNKNIHDISEKTLEPENQAPVLPAVTSKAELENSASYTDLRPVAEKSSPLRQSLPPHIGNGGPKVSFSQNPQQTAEEDGLLLHIVLMVPEGKGLVAAGGDSSGICNSYLNCKLFSAQEATRSSVVWGSTQPQYNFSQVAPLTLNARLLERMKNNVMIIEIWNRVASPGQDQLLGLAKLPLHQFYMSFSDPKITRLLLQAQYPVVAVDSYVPIIDVFSGCDRGKLKVLLAIGSGDQVVALQRLKNEEGTSQTAMPRPAHFLDPPLSSSQMGRPQEGMTDHIFEIHVENVKGLTPLQSTVWGEADCFVQYYFPAHGPDSHTAIDLPEIAMTLKPVRTATTLCVPDPVFNDRQSHTIVAQSDTPVQRLLLGAYSMQGLSGGGGVPFEIWCRYYYPNVRDQMVAKGVLPLSRLCAMVTMQHREDVGIQAFSLPLIPRSEKSAELPPQPSGLLNVNVTYRRSMRNPVGMLATRMASISVQIHRASGLQAAARLVAQQDASFQYSADVGVNAYVTIHPAFLPDVELRNTRTVARTFCPEFDHHYEFPCNMVIQRNNGEACSLAEVLYFSEIVLSIHHQNVASVGSTRPQPVRDYHLGMVRIPCRQLITKRSGVSGWYPVTVPEDSKLPTDSTILHSVVGGLELSVHFAHHSDRDRVLEVARGLGWNEYNEDFQEAIATEADEWHKREDLVNLSVNIPKIWLPLHCLLLAGHKHIHKSTYCYLRYKFYDREAVCSPLRRPRLSEDGQQATIMFELSENRELIKHQPLVWYLREERMEIQVWRSYGKDTNGPRPQDTDRLIGCAYVDLKALSENTSRTLAVSGVYPLFKRNVSSLWGAAVRVHLALSSAYHPSNSSRRLSCAGERSQSEGEEWAPTSGDSFEEKQDDSAKNDKPEAKTEVPLLDAKEQPVGEVDLKNTFAASIVVERAMHLSLKGTPLTERAAATPTCCVSYPVAGCSEPVTTPVIANTDSPLWNFQHQARLHKELLLDPQQRLVFKVWHKTDVERVVGFASVDLSPLLSGFQSICGWYNIVDFVGQCQGQVKVSITPLEGVAHLKTKVTSQRSSSYQSRPAFCSSFSYNPSQSEVPAFIPHIPTLHHQLSDRENSGPLFPFLRHEEHMENVRRFHESLQQAERNAHTVEGLDSLSQSSRSSLLSALRKNLGELDEIQKYFNQKLYRSISNAETSRCASVQIPQVQPPNSEPAEEDSDAKMLLQKSSFLVSQVSNLITGLQGIPKFAPAFSSTEQRLDVQGQTSVQHQQVDNMEPMAPERSEAYEREGQRSDTPPFSPLGSLNVSGEKLMEFIGTDMDEKERHLFAEKHQEEQDKHIIHGSSDEEYEEDVIEPRTLNEITTMTDRTSPWSSILSERDSDSMDHPQDQPVNPLAAENNRVITDFFSSFHQNDPSSVLSSARSTDSEVLAEGSRVRKISSSSGSEAETVGVQLSVDPAEQGALGEAESEAESQEMDGDPEANRTEEEQQDPVTVFSALSSGSDESEHITYGASEPDCSPPQDEPETDYPCSEPLEGNMHHIDEEEQPAGSESPQVPPSNLLSDPVIVPNFFLPPQHLEASMRHLSLSAVREGRSDTPGIPFRRSKRQKPRLAPADLPKEETNRIARIFAAQFPGPPTPP.

Disordered regions lie at residues 447-511 (SDSS…TSRC) and 543-562 (GTAVTPSKTNSRGRPPRPVR). Positions 470–509 (IALDRGRHRDNSPSEYKEDAKQTKGNDSLRDSKTSEKSTS) are enriched in basic and acidic residues. 6 consecutive C2 domains span residues 508–666 (TSRC…SVTC), 751–888 (GNGG…TRLL), 952–1112 (LDPP…HRED), 1136–1303 (PSGL…SGWY), 1370–1505 (HKRE…TLAV), and 1581–1713 (KTEV…CGWY). The segment at 939 to 964 (GTSQTAMPRPAHFLDPPLSSSQMGRP) is disordered. 5 disordered regions span residues 1536 to 1589 (PSNS…LLDA), 1955 to 1977 (SEAYEREGQRSDTPPFSPLGSLN), 2036 to 2065 (MTDRTSPWSSILSERDSDSMDHPQDQPVNP), 2084 to 2233 (NDPS…SNLL), and 2261 to 2292 (VREGRSDTPGIPFRRSKRQKPRLAPADLPKEE). Basic and acidic residues-rich tracts occupy residues 1565 to 1589 (FEEKQDDSAKNDKPEAKTEVPLLDA) and 1955 to 1964 (SEAYEREGQR). Over residues 2036–2047 (MTDRTSPWSSIL) the composition is skewed to polar residues. Residues 2048–2059 (SERDSDSMDHPQ) show a composition bias toward basic and acidic residues. A compositionally biased stretch (polar residues) spans 2084–2095 (NDPSSVLSSARS). Over residues 2138 to 2151 (AESEAESQEMDGDP) the composition is skewed to acidic residues. Residues 2221-2233 (GSESPQVPPSNLL) show a composition bias toward polar residues.

The protein resides in the cytoplasm. It localises to the cytoskeleton. It is found in the cilium basal body. Its subcellular location is the microtubule organizing center. The protein localises to the centrosome. The protein resides in the centriole. Component of the centrioles that acts as a positive regulator of centriole elongation. Promotes assembly of centriolar distal appendage, a structure at the distal end of the mother centriole that acts as an anchor of the cilium. Required for primary cilium formation. The polypeptide is C2 domain-containing protein 3 (c2cd3) (Xenopus tropicalis (Western clawed frog)).